Reading from the N-terminus, the 216-residue chain is UPF0711 protein C18orf21 homolog (216 aa).

Disordered regions lie at residues 118 to 185 and 197 to 216; these read RSFL…ASKT and SQSESKKNPKMDFRNFLSSL. The segment covering 124-136 has biased composition (polar residues); the sequence is LKSNPTTPTSKLS. At S126 the chain carries Phosphoserine. Phosphothreonine is present on residues T130 and T139. Composition is skewed to polar residues over residues 145-157 and 167-182; these read PSSANLNHTSGSK and TPTSGQSTSICSSKNA. Basic and acidic residues predominate over residues 200–209; that stretch reads ESKKNPKMDF.

The protein belongs to the UPF0711 family.

This chain is UPF0711 protein C18orf21 homolog, found in Bos taurus (Bovine).